Consider the following 529-residue polypeptide: Chromosomal replication initiator protein DnaA (529 aa).

The segment at 1–72 (MQDFWHAASA…SLACDYWEAT (72 aa)) is domain I, interacts with DnaA modulators. Residues 72-192 (TVDVQFVLDP…HVDDSVHERS (121 aa)) are domain II. The segment at 193-409 (RLNQILTFDN…GALRKILAYS (217 aa)) is domain III, AAA+ region. Residues glycine 237, glycine 239, lysine 240, and threonine 241 each coordinate ATP. The interval 410-529 (NFHGKEITIE…LHVLEQTLKG (120 aa)) is domain IV, binds dsDNA.

It belongs to the DnaA family. As to quaternary structure, oligomerizes as a right-handed, spiral filament on DNA at oriC.

It localises to the cytoplasm. Its function is as follows. Plays an essential role in the initiation and regulation of chromosomal replication. ATP-DnaA binds to the origin of replication (oriC) to initiate formation of the DNA replication initiation complex once per cell cycle. Binds the DnaA box (a 9 base pair repeat at the origin) and separates the double-stranded (ds)DNA. Forms a right-handed helical filament on oriC DNA; dsDNA binds to the exterior of the filament while single-stranded (ss)DNA is stabiized in the filament's interior. The ATP-DnaA-oriC complex binds and stabilizes one strand of the AT-rich DNA unwinding element (DUE), permitting loading of DNA polymerase. After initiation quickly degrades to an ADP-DnaA complex that is not apt for DNA replication. Binds acidic phospholipids. The polypeptide is Chromosomal replication initiator protein DnaA (Ralstonia pickettii (strain 12J)).